The primary structure comprises 240 residues: Eukaryotic translation initiation factor 3 subunit J (240 aa).

The segment at 1-66 (MADDWESAAD…VPVKTKPSKA (66 aa)) is disordered. A compositionally biased stretch (acidic residues) spans 27 to 45 (GEDDDDDVKESWEDEEEKK).

It belongs to the eIF-3 subunit J family. Component of the eukaryotic translation initiation factor 3 (eIF-3) complex. The eIF-3 complex interacts with pix.

It is found in the cytoplasm. Functionally, component of the eukaryotic translation initiation factor 3 (eIF-3) complex, which is involved in protein synthesis of a specialized repertoire of mRNAs and, together with other initiation factors, stimulates binding of mRNA and methionyl-tRNAi to the 40S ribosome. The eIF-3 complex specifically targets and initiates translation of a subset of mRNAs involved in cell proliferation. In Drosophila persimilis (Fruit fly), this protein is Eukaryotic translation initiation factor 3 subunit J.